Reading from the N-terminus, the 715-residue chain is Elongation factor G (715 aa).

The tr-type G domain maps to 8–290 (NRYRNIGICA…AVIDFLPAPT (283 aa)). Residues 17 to 24 (AHVDAGKT), 88 to 92 (DTPGH), and 142 to 145 (NKMD) each bind GTP.

This sequence belongs to the TRAFAC class translation factor GTPase superfamily. Classic translation factor GTPase family. EF-G/EF-2 subfamily.

It is found in the cytoplasm. Its function is as follows. Catalyzes the GTP-dependent ribosomal translocation step during translation elongation. During this step, the ribosome changes from the pre-translocational (PRE) to the post-translocational (POST) state as the newly formed A-site-bound peptidyl-tRNA and P-site-bound deacylated tRNA move to the P and E sites, respectively. Catalyzes the coordinated movement of the two tRNA molecules, the mRNA and conformational changes in the ribosome. The polypeptide is Elongation factor G (Pseudomonas fluorescens (strain ATCC BAA-477 / NRRL B-23932 / Pf-5)).